The sequence spans 429 residues: UDP-N-acetylglucosamine 1-carboxyvinyltransferase (429 aa).

22-23 (KN) is a phosphoenolpyruvate binding site. Arg102 contributes to the UDP-N-acetyl-alpha-D-glucosamine binding site. The active-site Proton donor is the Cys126. At Cys126 the chain carries 2-(S-cysteinyl)pyruvic acid O-phosphothioketal. UDP-N-acetyl-alpha-D-glucosamine is bound by residues 131-135 (RPVDL), 171-174 (KVSV), Asp316, and Ile338.

This sequence belongs to the EPSP synthase family. MurA subfamily.

It is found in the cytoplasm. The enzyme catalyses phosphoenolpyruvate + UDP-N-acetyl-alpha-D-glucosamine = UDP-N-acetyl-3-O-(1-carboxyvinyl)-alpha-D-glucosamine + phosphate. Its pathway is cell wall biogenesis; peptidoglycan biosynthesis. Its function is as follows. Cell wall formation. Adds enolpyruvyl to UDP-N-acetylglucosamine. The protein is UDP-N-acetylglucosamine 1-carboxyvinyltransferase of Brucella abortus (strain S19).